We begin with the raw amino-acid sequence, 635 residues long: PTS system fructose-specific EIIABC component (635 aa).

The PTS EIIA type-2 domain occupies 5-149; it reads ELLTKHTIKL…DAIIDIINQH (145 aa). Residue His67 is the Tele-phosphohistidine intermediate; for EIIA activity of the active site. Phosphohistidine; by HPr is present on His67. The segment at 149 to 168 is disordered; the sequence is HDKDDDEEEEEEEAAPAPAG. Over residues 152 to 162 the composition is skewed to acidic residues; it reads DDDEEEEEEEA. A PTS EIIB type-2 domain is found at 172–267; it reads ILAVTACPTG…PQELIEKAMN (96 aa). The active-site Phosphocysteine intermediate; for EIIB activity is the Cys178. Residue Cys178 is modified to Phosphocysteine; by EIIA. The interval 273-293 is disordered; the sequence is YQGSGGGSAASNDDEEAKGKS. Residues 301–635 enclose the PTS EIIC type-2 domain; the sequence is FYKHLMSGVS…GIVKKPVTEK (335 aa). Helical transmembrane passes span 312–332, 350–370, 392–412, 428–448, 470–490, 511–531, 544–564, 569–589, and 608–628; these read MLPF…WGIH, FIGG…FIAM, NAGF…VILL, PVLI…QFVV, NLVL…GGPL, AAIM…TTIF, ITCY…FAAA, VIPA…FFRV, and MLYL…LGIV.

It localises to the cell membrane. The enzyme catalyses D-fructose(out) + N(pros)-phospho-L-histidyl-[protein] = D-fructose 1-phosphate(in) + L-histidyl-[protein]. The phosphoenolpyruvate-dependent sugar phosphotransferase system (sugar PTS), a major carbohydrate active transport system, catalyzes the phosphorylation of incoming sugar substrates concomitantly with their translocation across the cell membrane. This system is involved in fructose transport. The polypeptide is PTS system fructose-specific EIIABC component (fruA) (Bacillus subtilis (strain 168)).